We begin with the raw amino-acid sequence, 517 residues long: Cytochrome P450 78A5 (517 aa).

Residues 20-40 (AFASVSLIIATVAFLLSPGGL) traverse the membrane as a helical segment. Cysteine 459 serves as a coordination point for heme.

This sequence belongs to the cytochrome P450 family. Requires heme as cofactor. In terms of tissue distribution, expressed in the periphery of the shoot apical meristem and inflorescence meristem, on the adaxial sides of developing floral organs and in developing ovules in the region where the integuments emerge.

It localises to the membrane. Functionally, plays a role in regulating directional growth at the meristem/organ boundary. Is required for the promotion of leaf and floral organ growth and for the prolongation of the plastochron. Promotes organ growth in a non-cell-autonomous manner and may generate a mobile growth signal distinct from the classical phytohormones that prevents premature arrest of proliferation, until the correct primordium size has been reached. Functions probably in association with CYP78A7 in regulating relative growth of the shoot apical meristem and plant organs. Is required locally in developing ovules to stimulates cell proliferation and promote seed growth. The polypeptide is Cytochrome P450 78A5 (CYP78A5) (Arabidopsis thaliana (Mouse-ear cress)).